The sequence spans 147 residues: Large ribosomal subunit protein uL13 (147 aa).

This sequence belongs to the universal ribosomal protein uL13 family. As to quaternary structure, part of the 50S ribosomal subunit.

Functionally, this protein is one of the early assembly proteins of the 50S ribosomal subunit, although it is not seen to bind rRNA by itself. It is important during the early stages of 50S assembly. In Mycobacterium leprae (strain Br4923), this protein is Large ribosomal subunit protein uL13.